We begin with the raw amino-acid sequence, 193 residues long: 3-isopropylmalate dehydratase small subunit (193 aa).

The protein belongs to the LeuD family. LeuD type 1 subfamily. In terms of assembly, heterodimer of LeuC and LeuD.

It catalyses the reaction (2R,3S)-3-isopropylmalate = (2S)-2-isopropylmalate. It functions in the pathway amino-acid biosynthesis; L-leucine biosynthesis; L-leucine from 3-methyl-2-oxobutanoate: step 2/4. Catalyzes the isomerization between 2-isopropylmalate and 3-isopropylmalate, via the formation of 2-isopropylmaleate. This chain is 3-isopropylmalate dehydratase small subunit, found in Bacillus cereus (strain B4264).